The following is a 246-amino-acid chain: Bis(5'-nucleosyl)-tetraphosphatase PrpE [asymmetrical] (246 aa).

Belongs to the PrpE family. Ni(2+) serves as cofactor.

It carries out the reaction P(1),P(4)-bis(5'-guanosyl) tetraphosphate + H2O = GMP + GTP + 2 H(+). Its function is as follows. Asymmetrically hydrolyzes Ap4p to yield AMP and ATP. This chain is Bis(5'-nucleosyl)-tetraphosphatase PrpE [asymmetrical], found in Halalkalibacterium halodurans (strain ATCC BAA-125 / DSM 18197 / FERM 7344 / JCM 9153 / C-125) (Bacillus halodurans).